The following is a 479-amino-acid chain: Adenosylhomocysteinase (479 aa).

Substrate contacts are provided by T65, D145, and E205. 206–208 contributes to the NAD(+) binding site; the sequence is TTT. Substrate-binding residues include K235 and D239. NAD(+) contacts are provided by residues N240, 269–274, E292, N327, 348–350, and N393; these read GYGDVG and IGH.

This sequence belongs to the adenosylhomocysteinase family. The cofactor is NAD(+).

It localises to the cytoplasm. It carries out the reaction S-adenosyl-L-homocysteine + H2O = L-homocysteine + adenosine. It functions in the pathway amino-acid biosynthesis; L-homocysteine biosynthesis; L-homocysteine from S-adenosyl-L-homocysteine: step 1/1. Its function is as follows. May play a key role in the regulation of the intracellular concentration of adenosylhomocysteine. The protein is Adenosylhomocysteinase of Janthinobacterium sp. (strain Marseille) (Minibacterium massiliensis).